A 72-amino-acid chain; its full sequence is Translation initiation factor IF-1 (72 aa).

The region spanning 1 to 72 (MSKEELLEFP…TKGRITYRFK (72 aa)) is the S1-like domain.

Belongs to the IF-1 family. As to quaternary structure, component of the 30S ribosomal translation pre-initiation complex which assembles on the 30S ribosome in the order IF-2 and IF-3, IF-1 and N-formylmethionyl-tRNA(fMet); mRNA recruitment can occur at any time during PIC assembly.

The protein resides in the cytoplasm. In terms of biological role, one of the essential components for the initiation of protein synthesis. Stabilizes the binding of IF-2 and IF-3 on the 30S subunit to which N-formylmethionyl-tRNA(fMet) subsequently binds. Helps modulate mRNA selection, yielding the 30S pre-initiation complex (PIC). Upon addition of the 50S ribosomal subunit IF-1, IF-2 and IF-3 are released leaving the mature 70S translation initiation complex. The sequence is that of Translation initiation factor IF-1 from Parvibaculum lavamentivorans (strain DS-1 / DSM 13023 / NCIMB 13966).